Reading from the N-terminus, the 320-residue chain is Tetraspanin-32 (320 aa).

The next 4 helical transmembrane spans lie at 14 to 34 (MLVTCFFILLLGLSVATMVTL), 60 to 80 (WAFSAGLSLVGLLTLGAVLSA), 90 to 110 (LMAGGFLCFSLAFCAQVQVVF), and 203 to 223 (SIGLALTVSALLFSSFLWFAI).

This sequence belongs to the tetraspanin (TM4SF) family. In terms of tissue distribution, expressed ubiquitously at low levels. High levels of expression are confined to hematopoietic tissues including peripheral blood leukocytes, thymus and spleen.

The protein localises to the membrane. The chain is Tetraspanin-32 (TSPAN32) from Homo sapiens (Human).